The following is a 1642-amino-acid chain: DNA-directed RNA polymerase I subunit RPA1 (1642 aa).

Zn(2+) contacts are provided by Cys66, Cys69, Cys75, and His78. Residues Asp565, Asp567, and Asp569 each coordinate Mg(2+). A bridging helix region spans residues 939–951 (PQDFFFHCMAGRE). Residues 1337 to 1428 (DADKDDDNDL…GNDNDGDDKA (92 aa)) are disordered. The segment covering 1340–1350 (KDDDNDLDNGD) has biased composition (acidic residues). The span at 1351-1361 (EVGRSKAKAND) shows a compositional bias: basic and acidic residues. Composition is skewed to acidic residues over residues 1362–1373 (DDSSDDNDDDDA) and 1386–1424 (KDYD…DNDG). Phosphoserine is present on residues Ser1364 and Ser1365.

Belongs to the RNA polymerase beta' chain family. In terms of assembly, component of the RNA polymerase I (Pol I) complex consisting of at least 13 subunits. Post-translationally, phosphorylated.

It localises to the nucleus. The protein resides in the nucleolus. It catalyses the reaction RNA(n) + a ribonucleoside 5'-triphosphate = RNA(n+1) + diphosphate. DNA-dependent RNA polymerase catalyzes the transcription of DNA into RNA using the four ribonucleoside triphosphates as substrates. Largest and catalytic core component of RNA polymerase I which synthesizes ribosomal RNA precursors. Forms the polymerase active center together with the second largest subunit. A single stranded DNA template strand of the promoter is positioned within the central active site cleft of Pol I. A bridging helix emanates from RPA1 and crosses the cleft near the catalytic site and is thought to promote translocation of Pol I by acting as a ratchet that moves the RNA-DNA hybrid through the active site by switching from straight to bent conformations at each step of nucleotide addition. The protein is DNA-directed RNA polymerase I subunit RPA1 (RpI1) of Drosophila melanogaster (Fruit fly).